Reading from the N-terminus, the 350-residue chain is Solute carrier family 35 member E4 (350 aa).

Over residues 19–30 the composition is skewed to low complexity; it reads GAAAGGAQAAGP. The segment at 19–42 is disordered; it reads GAAAGGAQAAGPPEWPPGSPQALR. 8 helical membrane passes run 51–71, 73–93, 110–132, 135–155, 218–238, 258–278, 279–299, and 312–332; these read MAALVWLLAGASMSSLNKWIF, VHGFGRPLLLSALHMLVAALA, VLLLSLTFGTSMACGNVGLRAVP, LAQLVTTTTPLFTLALSALLL, VTLLYATSLPSFCLLAGAALV, ILLSCLLSVLYNLASFSLLAL, TSALTVHVLGNLTVVGNLILS, and YVGIALTLSGMFLYHNCEFVA. In terms of domain architecture, EamA spans 125–179; the sequence is NVGLRAVPLDLAQLVTTTTPLFTLALSALLLGRRHHPLQLAAMGPLCLGAACSLA.

It belongs to the TPT transporter family. SLC35E subfamily.

The protein localises to the membrane. In terms of biological role, putative transporter. The polypeptide is Solute carrier family 35 member E4 (SLC35E4) (Homo sapiens (Human)).